A 282-amino-acid chain; its full sequence is DNA-binding transcriptional repressor YiaJ (282 aa).

Basic and acidic residues predominate over residues 1 to 20 (MGKEVMGKKENEMAQEKERP). A disordered region spans residues 1 to 21 (MGKEVMGKKENEMAQEKERPA). One can recognise an HTH iclR-type domain in the interval 23–85 (SQSLFRGLML…PAAGSYRLTT (63 aa)). Residues 45 to 64 (LAHLSELAGLNKSTVHRLLQ) constitute a DNA-binding region (H-T-H motif). Residues 100 to 272 (IIHIAAPHLE…AQAISNELGF (173 aa)) enclose the IclR-ED domain.

Its function is as follows. Negatively controls the transcription of the yiaKLMNOPQRS operon, which may be involved in the utilization of 2,3-diketo-L-gulonate. This chain is DNA-binding transcriptional repressor YiaJ (yiaJ), found in Escherichia coli (strain K12).